Consider the following 482-residue polypeptide: Early growth response protein 4 (482 aa).

A disordered region spans residues 274–357 (DLGEGAESLP…PPAKARRKGR (84 aa)). Residues 280 to 290 (ESLPGLLTPPS) are compositionally biased toward low complexity. Over residues 291–302 (GEGGSSGEGGEF) the composition is skewed to gly residues. Residues 337 to 349 (PEPPVPPPAPFPP) show a composition bias toward pro residues. 3 consecutive C2H2-type zinc fingers follow at residues 376–400 (FACP…LRIH), 406–428 (FQCR…VRTH), and 434–456 (FACD…SKVH).

The protein belongs to the EGR C2H2-type zinc-finger protein family. Expressed in brain. In the cerebellum and frontal cortex.

It localises to the nucleus. Functionally, transcriptional regulator. Recognizes and binds to the DNA sequence 5'-GCGGGGGCG-3' (GSG). Activates the transcription of target genes whose products are required for mitogenesis and differentiation. This Bos taurus (Bovine) protein is Early growth response protein 4 (EGR4).